The following is a 453-amino-acid chain: Ezy-1 protein (453 aa).

An N-terminal signal peptide occupies residues 1-28 (MQLSNSLRSARSAAASSGCALASRPVVA). Disordered regions lie at residues 167–187 (SDGG…DADG), 272–307 (TGKA…SSGG), and 412–453 (SAGD…SPNM). Positions 279–300 (AEGDDGEGEEEGEAQDVGEDAV) are enriched in acidic residues. The segment covering 415–425 (DGHEPEPKRPE) has biased composition (basic and acidic residues).

In Chlamydomonas reinhardtii (Chlamydomonas smithii), this protein is Ezy-1 protein (Ezy-1).